The primary structure comprises 152 residues: Endoribonuclease YbeY (152 aa).

Zn(2+)-binding residues include His113, His117, and His123.

The protein belongs to the endoribonuclease YbeY family. Requires Zn(2+) as cofactor.

Its subcellular location is the cytoplasm. Its function is as follows. Single strand-specific metallo-endoribonuclease involved in late-stage 70S ribosome quality control and in maturation of the 3' terminus of the 16S rRNA. The chain is Endoribonuclease YbeY from Acidovorax sp. (strain JS42).